A 380-amino-acid polypeptide reads, in one-letter code: Cytochrome b (380 aa).

Helical transmembrane passes span 34 to 54 (FGSLLGICLATQILTGLLLAA), 78 to 99 (WLIRNLHANGASFFFICIYLHI), 114 to 134 (WNTGVILLLTLMATAFVGYVL), and 179 to 199 (FFTLHFLLPFMIMGLTLIHLT). His-84 and His-98 together coordinate heme b. Residues His-183 and His-197 each coordinate heme b. His-202 contacts a ubiquinone. A run of 4 helical transmembrane segments spans residues 227 to 247 (LKDILGFMLMLLPLMTLALFS), 289 to 309 (LGGVLALAASVLILFLAPLLH), 321 to 341 (LSQLLFWTLTANLLILTWVGS), and 348 to 368 (FMIIGQLASLTYFTILLVLFP).

It belongs to the cytochrome b family. The cytochrome bc1 complex contains 11 subunits: 3 respiratory subunits (MT-CYB, CYC1 and UQCRFS1), 2 core proteins (UQCRC1 and UQCRC2) and 6 low-molecular weight proteins (UQCRH/QCR6, UQCRB/QCR7, UQCRQ/QCR8, UQCR10/QCR9, UQCR11/QCR10 and a cleavage product of UQCRFS1). This cytochrome bc1 complex then forms a dimer. Heme b is required as a cofactor.

The protein localises to the mitochondrion inner membrane. In terms of biological role, component of the ubiquinol-cytochrome c reductase complex (complex III or cytochrome b-c1 complex) that is part of the mitochondrial respiratory chain. The b-c1 complex mediates electron transfer from ubiquinol to cytochrome c. Contributes to the generation of a proton gradient across the mitochondrial membrane that is then used for ATP synthesis. The protein is Cytochrome b (MT-CYB) of Anthropoides virgo (Demoiselle crane).